A 393-amino-acid chain; its full sequence is Putative zinc metalloprotease Rip3 (393 aa).

The next 2 helical transmembrane spans lie at 10-30 (IAGF…LFTW) and 45-65 (AVVY…SLLA). Residue His-66 coordinates Zn(2+). The active site involves Glu-67. Zn(2+) is bound at residue His-70. The next 4 membrane-spanning stretches (helical) occupy residues 77-97 (AGVS…ALGG), 108-128 (IAFA…ALAI), 136-156 (PAIV…LGLF), and 207-227 (FVAG…FIFA). CBS domains lie at 251-308 (MTAQ…RRST) and 315-376 (ALPL…AQPE).

The protein belongs to the peptidase M50B family. It depends on Zn(2+) as a cofactor.

Its subcellular location is the cell membrane. This is Putative zinc metalloprotease Rip3 (rip3) from Mycobacterium tuberculosis (strain ATCC 35801 / TMC 107 / Erdman).